Reading from the N-terminus, the 220-residue chain is Cell division protein SepF (220 aa).

A disordered region spans residues 33–82; that stretch reads GAARGYARRPREDRFEEEGYIDRAGREYDDRPAPREYDEPPIYRGGYDEP. A compositionally biased stretch (basic and acidic residues) spans 52–70; it reads YIDRAGREYDDRPAPREYD.

Belongs to the SepF family. In terms of assembly, homodimer. Interacts with FtsZ.

It localises to the cytoplasm. Its function is as follows. Cell division protein that is part of the divisome complex and is recruited early to the Z-ring. Probably stimulates Z-ring formation, perhaps through the cross-linking of FtsZ protofilaments. Its function overlaps with FtsA. This is Cell division protein SepF from Mycobacterium sp. (strain JLS).